The following is a 447-amino-acid chain: UDP-N-acetylmuramoyl-L-alanyl-D-glutamate--2,6-diaminopimelate ligase (447 aa).

Threonine 21 contributes to the UDP-N-acetyl-alpha-D-muramoyl-L-alanyl-D-glutamate binding site. 74-80 lines the ATP pocket; that stretch reads GTNGKTT. Residues 117–118, serine 144, glutamine 150, and arginine 152 contribute to the UDP-N-acetyl-alpha-D-muramoyl-L-alanyl-D-glutamate site; that span reads TT. An N6-carboxylysine modification is found at lysine 184. Meso-2,6-diaminopimelate is bound by residues arginine 340, 364-367, glycine 415, and glutamate 419; that span reads DNPR. The short motif at 364–367 is the Meso-diaminopimelate recognition motif element; sequence DNPR.

The protein belongs to the MurCDEF family. MurE subfamily. Mg(2+) serves as cofactor. In terms of processing, carboxylation is probably crucial for Mg(2+) binding and, consequently, for the gamma-phosphate positioning of ATP.

It is found in the cytoplasm. It carries out the reaction UDP-N-acetyl-alpha-D-muramoyl-L-alanyl-D-glutamate + meso-2,6-diaminopimelate + ATP = UDP-N-acetyl-alpha-D-muramoyl-L-alanyl-gamma-D-glutamyl-meso-2,6-diaminopimelate + ADP + phosphate + H(+). It participates in cell wall biogenesis; peptidoglycan biosynthesis. Its function is as follows. Catalyzes the addition of meso-diaminopimelic acid to the nucleotide precursor UDP-N-acetylmuramoyl-L-alanyl-D-glutamate (UMAG) in the biosynthesis of bacterial cell-wall peptidoglycan. The protein is UDP-N-acetylmuramoyl-L-alanyl-D-glutamate--2,6-diaminopimelate ligase of Helicobacter pylori (strain J99 / ATCC 700824) (Campylobacter pylori J99).